Reading from the N-terminus, the 457-residue chain is Protein trichome birefringence-like 4 (457 aa).

The helical; Signal-anchor for type II membrane protein transmembrane segment at Ile19 to Leu37 threads the bilayer. The GDS motif motif lies at Gly173–Ser175. The DCXHWCLPGXXDXWN motif signature appears at Asp420–Asn434.

It belongs to the PC-esterase family. TBL subfamily.

The protein resides in the membrane. In terms of biological role, may act as a bridging protein that binds pectin and other cell wall polysaccharides. Probably involved in maintaining esterification of pectins. May be involved in the specific O-acetylation of cell wall polymers. In Arabidopsis thaliana (Mouse-ear cress), this protein is Protein trichome birefringence-like 4 (TBL4).